A 780-amino-acid polypeptide reads, in one-letter code: cGMP-dependent protein kinase egl-4 (780 aa).

2 disordered regions span residues 1 to 55 (MSSG…QVQV) and 119 to 143 (EQKA…DQLG). The span at 9–35 (SGGGGGGGGASGGAGGGAPGGGGGGIR) shows a compositional bias: gly residues. A compositionally biased stretch (polar residues) spans 46 to 55 (DQPNGNQVQV). Residues 61 to 127 (EAHELQKLIP…LEQKAQSAAS (67 aa)) adopt a coiled-coil conformation. Residues 265–268 (GELA), 275–276 (RT), Arg380, 389–392 (GERA), 399–400 (RT), and Tyr434 contribute to the 3',5'-cyclic GMP site. Residues 469–729 (VKRLATLGVG…VNDIRKHRWF (261 aa)) form the Protein kinase domain. ATP is bound by residues 475-483 (LGVGGFGRV) and Lys499. The short motif at 492–504 (KAKTFALKALKKK) is the Nuclear localization signal element. The active-site Proton acceptor is the Asp593. An AGC-kinase C-terminal domain is found at 730 to 780 (MGFDWEGLRSRTLKPPILPKVSNPADVTNFDNYPPDNDVPPDEFSGWDEGF). The segment at 757-780 (TNFDNYPPDNDVPPDEFSGWDEGF) is disordered.

Belongs to the protein kinase superfamily. AGC Ser/Thr protein kinase family. cGMP subfamily. As to quaternary structure, when phosphorylated, interacts with saeg-2. May interact with saeg-1. Mg(2+) serves as cofactor. Autophosphorylated. In terms of tissue distribution, expressed in AWC sensory neurons (at protein level). Mainly expressed in head neurons, hypodermis, intestine and body wall muscles. L2 and L3 larvae show extensive expression, lower levels are observed in L4 larvae, later embryos and adults. Isoform c is expressed in a subset of neurons in the head, nerve ring, and ventral nerve cord including some motor neurons, also in several neurons in the tail, the pharyngeal marginal cells, body muscle, intestine, vulval muscles, and spermatheca.

It localises to the cytoplasm. The protein resides in the nucleus. The enzyme catalyses L-seryl-[protein] + ATP = O-phospho-L-seryl-[protein] + ADP + H(+). The catalysed reaction is L-threonyl-[protein] + ATP = O-phospho-L-threonyl-[protein] + ADP + H(+). Binding of cGMP results in enzyme activation. Its function is as follows. Promotes chemoreceptor gene expression in response to increased cGMP levels by antagonizing the gene repression functions of the class II HDAC hda-4 and the mef-2 transcription factor. Regulates gene expression via recruitment of a histone deacetylase complex containing hda-2, saeg-1 and saeg-2. Represses body size and lifespan through the dbl-1 and insulin pathways, respectively. May also signal through daf-3 and/or daf-5. Role in egg-laying, dauer formation and motility. Regulates behavioral responses to various chemosensory stimuli in sensory neurons. Required for the initiation of long term adaptation to prolonged odor exposure which results in a decrease in odor seeking behavior. May regulate this process by phosphorylating tax-2, a subunit of cyclic nucleotide-gated channel tax-2/tax-4. In ASH sensory neurons, negatively regulates avoidance behavior to some bitter tastants, such as quinine, probably by phosphorylating rgs-2 and rgs-3 which are 2 regulator of G-protein signaling proteins. In AWB sensory neurons, involved in avoidance behavior to some repellent odors. In ASE left (ASEL) sensory neuron, involved in the sensing of environmental alkalinity downstream of receptor-type guanylate cyclase gcy-14. In sensory neurons, involved in the signaling pathway downstream of insulin, TGF-beta and receptor-type guanylate cyclase responsible for inducing quiescence after food intake. Might play a role in aversive olfactory learning in AWC neurons when an odor is associated with food deprivation, depending on the ins-1/age-1 signal from the AIA to the AWC neurons. Probably by regulating neuronal transmission downstream of lin-3 and receptor lin-23 and phospholipase plc-3 in ALA neurons, involved in the decrease in locomotion during the quiescent state that precedes each larval molt. This is cGMP-dependent protein kinase egl-4 from Caenorhabditis elegans.